The primary structure comprises 149 residues: Large ribosomal subunit protein bL9 (149 aa).

Belongs to the bacterial ribosomal protein bL9 family.

In terms of biological role, binds to the 23S rRNA. The sequence is that of Large ribosomal subunit protein bL9 from Shewanella amazonensis (strain ATCC BAA-1098 / SB2B).